The sequence spans 308 residues: NADH-cytochrome b5 reductase 1 (308 aa).

The chain crosses the membrane as a helical span at residues 29-49 (VASSPAFLVAAAAIVIAAAFY). The 104-residue stretch at 64 to 167 (SIWKEFPLQK…KGPKGNFKYT (104 aa)) folds into the FAD-binding FR-type domain. FAD contacts are provided by residues 147–162 (ASLK…GPKG) and 173–205 (HLGM…NITL).

This sequence belongs to the flavoprotein pyridine nucleotide cytochrome reductase family. In terms of assembly, monomer. Component of the 2-(3-amino-3-carboxypropyl)histidine synthase complex composed of DPH1, DPH2, DPH3 and a NADH-dependent reductase, predominantly MCR1.1. FAD serves as cofactor.

The protein resides in the mitochondrion outer membrane. The enzyme catalyses 2 Fe(III)-[cytochrome b5] + NADH = 2 Fe(II)-[cytochrome b5] + NAD(+) + H(+). The catalysed reaction is 2 Fe(3+)-[Dph3] + NADH = 2 Fe(2+)-[Dph3] + NAD(+) + H(+). It participates in protein modification; peptidyl-diphthamide biosynthesis. In terms of biological role, NADH-dependent reductase for DPH3 and cytochrome b5. Required for the first step of diphthamide biosynthesis, a post-translational modification of histidine which occurs in elongation factor 2. DPH1 and DPH2 transfer a 3-amino-3-carboxypropyl (ACP) group from S-adenosyl-L-methionine (SAM) to a histidine residue, the reaction is assisted by a reduction system comprising DPH3 and a NADH-dependent reductase, predominantly MCR1.1. By reducing DPH3, also involved in the formation of the tRNA wobble base modification mcm5s 2U (5-methoxycarbonylmethyl-2-thiouridine), mediated by the elongator complex. The cytochrome b5/NADH cytochrome b5 reductase electron transfer system supports the catalytic activity of several sterol biosynthetic enzymes. The protein is NADH-cytochrome b5 reductase 1 (MCR1.1) of Laccaria bicolor (strain S238N-H82 / ATCC MYA-4686) (Bicoloured deceiver).